Consider the following 188-residue polypeptide: Large ribosomal subunit protein eL18 (188 aa).

Belongs to the eukaryotic ribosomal protein eL18 family.

The protein resides in the cytoplasm. The protein is Large ribosomal subunit protein eL18 (RpL18) of Drosophila melanogaster (Fruit fly).